A 692-amino-acid chain; its full sequence is MFNKVEADIDGKLISIETGKLAKQASGSIVISCGGTVVLVTVVGAKTSNPNVDFLPLTIEYQEKFSAVGRVPGNYFRREIGRPSDQEVLTCRIIDRPLRPLFPEGYRSETQVIATVLSADQVNSPDVLALTGASAALSISHIPFAGPVAGGRIAYIDGKYVLNPTFAELESSSMDLMVACTRNAIVMVEGKADELSEDEILGAIFFAFENLQPLINLQDELQRANGLEKIVVESPVIDAELKAKVVEIAAAGMQKVYTTVDKLERGKVYDDLKKEVVAQLDTEEGLRASEISSLLSDFKKTYLREKTVNTGVRIGGRAWDEIRDISSETEYLPKTHGSALFTRGETQALVTATLGSERDKQRVETLNGETSRRFMLHYNFPPYCVGEARFLRGPSRRDIGHGTLATRGLEAVLPSEEDFPYAIRVVSEILESNGSSSMASVCGGSMAMMDAGVPLKRPVSGIAMGLIKEGEGVAILSDILGDEDHLGDMDFKVVGTCDGITALQMDIKIDGVSRDIMSNALDQAKRGRMHILEEMSKGIAEARAEVVEHAPKYFIHKISQDKIRDIIGPGGKIIKELSAQYDAKIEVDDSGLVKMFVANGALAEALVERVKSITAEVEVGAVYTGKVKTIKDFGAFVEILPGTDGLVHISELALERVKDVTDVVNEGDTIEVKVLDVDNRGRIRLSRKALLG.

Residues D484 and D490 each coordinate Mg(2+). The KH domain occupies 551–614; that stretch reads PKYFIHKISQ…ALVERVKSIT (64 aa). One can recognise an S1 motif domain in the interval 620 to 688; sequence GAVYTGKVKT…NRGRIRLSRK (69 aa).

The protein belongs to the polyribonucleotide nucleotidyltransferase family. Mg(2+) serves as cofactor.

It localises to the cytoplasm. It carries out the reaction RNA(n+1) + phosphate = RNA(n) + a ribonucleoside 5'-diphosphate. Functionally, involved in mRNA degradation. Catalyzes the phosphorolysis of single-stranded polyribonucleotides processively in the 3'- to 5'-direction. The chain is Polyribonucleotide nucleotidyltransferase from Desulfotalea psychrophila (strain LSv54 / DSM 12343).